Here is a 600-residue protein sequence, read N- to C-terminus: MPVDSKLIRNFSIIAHIDHGKSTLADRILDATGALTAREQKEQFLDKMDIERERGITIKAQTVRLDYTAKDGQTYRLHLIDTPGHVDFNYEVSRSLQACEGALLVVDATQGVEAQTLANVFLALDNNLAILPVLNKIDLPSADIERTTREIEDVIGLDCSGAIPASAKTGIGIAEILEAVVERIPAPKGDPNAAPRALIFDSWYDSYRGAVVMVRVVDGIIRKGQKVRFMATGRDYEVTEMGVFTPHATAITELGPGEVGFLVGNIKSVVDTKIGDTVTDAVHPATTPLPGFKEVKPMVFAGIFPTDSAQYEDLRDALSKLHMNDAAFVFEPDTSEALGFGFRCGFLGLLHMEIIQERLEREYNLDLITTAPSVVYHCYLNDGSMKSIENPAKLPPPNLTDRIEEPIFRMTVHVPSTYVGAVLALCQERRGEQKSIQYASSDRVIITYDMPLSEVLFDFHDKLKSVSRGYASMDYELVGYRADDLIKLDMLVNGDPLDALSVIVHRDKAYARGRDLAVKLKDIVPRQQYEVAIQAAIGSKVIARTTVKAMRKDVTAKCYGGDISRKRKLLEKQKEGKKRMKMVGSVEIPQEAFLAILKID.

The 183-residue stretch at 6 to 188 folds into the tr-type G domain; that stretch reads KLIRNFSIIA…AVVERIPAPK (183 aa). GTP contacts are provided by residues 18-23 and 135-138; these read DHGKST and NKID.

The protein belongs to the TRAFAC class translation factor GTPase superfamily. Classic translation factor GTPase family. LepA subfamily.

The protein localises to the cell inner membrane. The catalysed reaction is GTP + H2O = GDP + phosphate + H(+). In terms of biological role, required for accurate and efficient protein synthesis under certain stress conditions. May act as a fidelity factor of the translation reaction, by catalyzing a one-codon backward translocation of tRNAs on improperly translocated ribosomes. Back-translocation proceeds from a post-translocation (POST) complex to a pre-translocation (PRE) complex, thus giving elongation factor G a second chance to translocate the tRNAs correctly. Binds to ribosomes in a GTP-dependent manner. The sequence is that of Elongation factor 4 from Sorangium cellulosum (strain So ce56) (Polyangium cellulosum (strain So ce56)).